Consider the following 408-residue polypeptide: Imidazolonepropionase (408 aa).

2 residues coordinate Fe(3+): H73 and H75. H73 and H75 together coordinate Zn(2+). Positions 82, 145, and 178 each coordinate 4-imidazolone-5-propanoate. Y145 serves as a coordination point for N-formimidoyl-L-glutamate. A Fe(3+)-binding site is contributed by H243. H243 contacts Zn(2+). Q246 contacts 4-imidazolone-5-propanoate. D318 provides a ligand contact to Fe(3+). D318 is a binding site for Zn(2+). 2 residues coordinate N-formimidoyl-L-glutamate: N320 and G322. S323 provides a ligand contact to 4-imidazolone-5-propanoate.

It belongs to the metallo-dependent hydrolases superfamily. HutI family. Zn(2+) serves as cofactor. Fe(3+) is required as a cofactor.

Its subcellular location is the cytoplasm. It carries out the reaction 4-imidazolone-5-propanoate + H2O = N-formimidoyl-L-glutamate. It functions in the pathway amino-acid degradation; L-histidine degradation into L-glutamate; N-formimidoyl-L-glutamate from L-histidine: step 3/3. Catalyzes the hydrolytic cleavage of the carbon-nitrogen bond in imidazolone-5-propanoate to yield N-formimidoyl-L-glutamate. It is the third step in the universal histidine degradation pathway. In Shewanella oneidensis (strain ATCC 700550 / JCM 31522 / CIP 106686 / LMG 19005 / NCIMB 14063 / MR-1), this protein is Imidazolonepropionase.